A 334-amino-acid polypeptide reads, in one-letter code: Probable tRNA pseudouridine synthase B (334 aa).

The active-site Nucleophile is the D82. The region spanning 250–325 (LPKIWIKDSA…IAVDVEKVFM (76 aa)) is the PUA domain.

This sequence belongs to the pseudouridine synthase TruB family. Type 2 subfamily.

It catalyses the reaction uridine(55) in tRNA = pseudouridine(55) in tRNA. Functionally, could be responsible for synthesis of pseudouridine from uracil-55 in the psi GC loop of transfer RNAs. In Pyrococcus abyssi (strain GE5 / Orsay), this protein is Probable tRNA pseudouridine synthase B.